Consider the following 99-residue polypeptide: Prostate and testis expressed protein 14 (99 aa).

Residues 1 to 21 form the signal peptide; the sequence is MEKYLLLLLLGIFLRVGFLQA. The 78-residue stretch at 22–99 folds into the UPAR/Ly6 domain; sequence LTCVSCGRLN…CDHQNLCNKP (78 aa). Disulfide bonds link Cys-24/Cys-51, Cys-27/Cys-36, Cys-43/Cys-69, Cys-73/Cys-89, and Cys-90/Cys-96. Residue Asn-31 is glycosylated (N-linked (GlcNAc...) asparagine). Asn-75 carries N-linked (GlcNAc...) asparagine glycosylation.

Belongs to the PATE family. Monomer. Glycosylated. As to expression, predominantly expressed in the seminal vesicles. Expressed in prostate, and to a lesser extent in the cauda epididymis.

Its subcellular location is the secreted. This is Prostate and testis expressed protein 14 from Mus musculus (Mouse).